The primary structure comprises 263 residues: L-aspartate dehydrogenase (263 aa).

NAD(+) contacts are provided by Ala-120 and Asn-186. His-216 is an active-site residue.

The protein belongs to the L-aspartate dehydrogenase family.

It carries out the reaction L-aspartate + NADP(+) + H2O = oxaloacetate + NH4(+) + NADPH + H(+). The enzyme catalyses L-aspartate + NAD(+) + H2O = oxaloacetate + NH4(+) + NADH + H(+). It participates in cofactor biosynthesis; NAD(+) biosynthesis; iminoaspartate from L-aspartate (dehydrogenase route): step 1/1. Specifically catalyzes the NAD or NADP-dependent dehydrogenation of L-aspartate to iminoaspartate. This Acinetobacter baumannii (strain AB307-0294) protein is L-aspartate dehydrogenase.